Reading from the N-terminus, the 457-residue chain is B-cell linker protein (457 aa).

A disordered region spans residues 36-306 (IKKLKVKGPP…FPPTQKPVHQ (271 aa)). Acidic residues predominate over residues 57 to 74 (PADEEEQWSDDFDSDYEN). A phosphotyrosine; by SYK mark is found at Tyr-72, Tyr-84, Tyr-96, Tyr-178, and Tyr-189. The span at 172-187 (LEDEADYVVPVEDNDE) shows a compositional bias: acidic residues. A compositionally biased stretch (polar residues) spans 207–218 (NRSTKPNSSSKH). Residues 272 to 290 (CEEKPVPAERHRGSSHRQD) are compositionally biased toward basic and acidic residues. The region spanning 347–454 (WYAGACDRKS…KDSTRLKYAV (108 aa)) is the SH2 domain.

In terms of assembly, associates with PLCG1, VAV1 and NCK1 in a B-cell antigen receptor-dependent fashion. Interacts with VAV3, PLCG2 and GRB2. Interacts through its SH2 domain with CD79A. Interacts (via SH2 domain) with SYK; phosphorylated and activated by SYK. Interacts (via SH2 domain) with SCIMP; this interaction is dependent on phosphorylation of SCIMP 'Tyr-120'. In terms of processing, following BCR activation, phosphorylated on tyrosine residues by SYK and LYN. When phosphorylated, serves as a scaffold to assemble downstream targets of antigen activation, including PLCG1, VAV1, GRB2 and NCK1. Phosphorylation of Tyr-84, Tyr-178 and Tyr-189 facilitates PLCG1 binding. Phosphorylation of Tyr-72 facilitates VAV1 and NCK1 binding. Phosphorylation is required for both Ca(2+) and MAPK signaling pathways. Phosphorylation of Tyr-96 is required for the binding of BTK. Expressed in the spleen and weakly in thymus, no expression was seen in liver, testis, or brain. Expressed in B-cell lines representing different developmental stages from the pre-B to the plasma cell stage, but not in a T-cell or a fibroblast cell line.

It localises to the cytoplasm. The protein localises to the cell membrane. Functions as a central linker protein, downstream of the B-cell receptor (BCR), bridging the SYK kinase to a multitude of signaling pathways and regulating biological outcomes of B-cell function and development. Plays a role in the activation of ERK/EPHB2, MAP kinase p38 and JNK. Modulates AP1 activation. Important for the activation of NF-kappa-B and NFAT. Plays an important role in BCR-mediated PLCG1 and PLCG2 activation and Ca(2+) mobilization and is required for trafficking of the BCR to late endosomes. However, does not seem to be required for pre-BCR-mediated activation of MAP kinase and phosphatidyl-inositol 3 (PI3) kinase signaling. May be required for the RAC1-JNK pathway. Plays a critical role in orchestrating the pro-B cell to pre-B cell transition. May play an important role in BCR-induced B-cell apoptosis. In Mus musculus (Mouse), this protein is B-cell linker protein (Blnk).